Consider the following 377-residue polypeptide: Carbamoyl phosphate synthase small chain (377 aa).

The segment at Met1–Glu186 is CPSase. L-glutamine is bound by residues Ser47, Gly238, and Gly240. A Glutamine amidotransferase type-1 domain is found at His190–Ala377. The active-site Nucleophile is the Cys266. Residues Leu267, Gln270, Asn308, Gly310, and Phe311 each contribute to the L-glutamine site. Residues His350 and Glu352 contribute to the active site.

The protein belongs to the CarA family. As to quaternary structure, composed of two chains; the small (or glutamine) chain promotes the hydrolysis of glutamine to ammonia, which is used by the large (or ammonia) chain to synthesize carbamoyl phosphate. Tetramer of heterodimers (alpha,beta)4.

It carries out the reaction hydrogencarbonate + L-glutamine + 2 ATP + H2O = carbamoyl phosphate + L-glutamate + 2 ADP + phosphate + 2 H(+). The enzyme catalyses L-glutamine + H2O = L-glutamate + NH4(+). Its pathway is amino-acid biosynthesis; L-arginine biosynthesis; carbamoyl phosphate from bicarbonate: step 1/1. It functions in the pathway pyrimidine metabolism; UMP biosynthesis via de novo pathway; (S)-dihydroorotate from bicarbonate: step 1/3. Small subunit of the glutamine-dependent carbamoyl phosphate synthetase (CPSase). CPSase catalyzes the formation of carbamoyl phosphate from the ammonia moiety of glutamine, carbonate, and phosphate donated by ATP, constituting the first step of 2 biosynthetic pathways, one leading to arginine and/or urea and the other to pyrimidine nucleotides. The small subunit (glutamine amidotransferase) binds and cleaves glutamine to supply the large subunit with the substrate ammonia. This chain is Carbamoyl phosphate synthase small chain, found in Neisseria meningitidis serogroup B (strain ATCC BAA-335 / MC58).